A 471-amino-acid chain; its full sequence is Vitellogenic carboxypeptidase (471 aa).

A signal peptide spans 1–19 (MVKFHLLVLIAFTCYTCSD). An N-linked (GlcNAc...) asparagine glycan is attached at N135. Catalysis depends on residues S207, D391, and H448.

This sequence belongs to the peptidase S10 family. Synthesized in the fat body of vitellogenic females, secreted into the hemolymph and accumulates in yolk bodies of developing oocytes.

It is found in the secreted. May play a role in activating hydrolytic enzymes that are involved in the degradation of yolk proteins in developing embryos or may function as an exopeptidase in the degradation of vitellogenin. This is Vitellogenic carboxypeptidase (VCP) from Aedes aegypti (Yellowfever mosquito).